The following is a 427-amino-acid chain: Tumor necrosis factor receptor superfamily member 16 (427 aa).

Residues 1–31 form the signal peptide; it reads MRRAGAACSAMDRLRLLLLLLLLLGVSFGGA. Over 32–254 the chain is Extracellular; the sequence is KETCSTGMYT…VVTRGTADNL (223 aa). TNFR-Cys repeat units follow at residues 34–67, 69–110, 111–149, and 151–191; these read TCSTGMYTHSGECCKACNLGEGVAQPCGANQTVC, PCLD…DAVC, RCSYGYYQDEETGRCEACSVCGVGSGLVFSCQDKQNTVC, and ECPE…DAEC. Intrachain disulfides connect cysteine 35/cysteine 46, cysteine 47/cysteine 60, cysteine 50/cysteine 67, cysteine 70/cysteine 86, cysteine 89/cysteine 102, cysteine 92/cysteine 110, cysteine 112/cysteine 125, cysteine 128/cysteine 141, cysteine 131/cysteine 149, cysteine 152/cysteine 167, cysteine 170/cysteine 183, and cysteine 173/cysteine 191. Asparagine 63 is a glycosylation site (N-linked (GlcNAc...) asparagine). Residues 197–223 are disordered; sequence RWITRSTPPEGSDVTTPSTQEPEAPPE. A compositionally biased stretch (polar residues) spans 200–217; the sequence is TRSTPPEGSDVTTPSTQE. The helical transmembrane segment at 255 to 275 threads the bilayer; sequence IPVYCSILAAVVVGLVAYIAF. Residues 276–427 are Cytoplasmic-facing; that stretch reads KRWNSCKQNK…CSESTATSPV (152 aa). Composition is skewed to polar residues over residues 284–294 and 308–329; these read NKQGANSRPVN and SGISVDSQSLHDQQTHTQTASG. The segment at 284–334 is disordered; it reads NKQGANSRPVNQTPPPEGEKLHSDSGISVDSQSLHDQQTHTQTASGQALKG. Serine 314 carries the phosphoserine modification. Positions 329 to 344 are mediates interaction with KIDINS220; the sequence is GQALKGDGNLYSSLPL. The Death domain maps to 356–421; the sequence is GDTWRHLAGE…DIVESLCSES (66 aa).

Homodimer; disulfide-linked. Heterodimer with SORCS2. The extracellular domains of the heterodimer bind NGF. The cytoplasmic region of the heterodimer binds TRIO. NGF binding mediates dissociation of TRIO from the receptor complex. Interacts with TRAF2, TRAF4, TRAF6, PTPN13 and RANBP9. Interacts through TRAF6 with SQSTM1 which bridges NGFR to NTRK1. Interacts with BEX1. Interacts with BEX3. Interacts with KIDINS220 and NTRK1. Can form a ternary complex with NTRK1 and KIDINS220 and this complex is affected by the expression levels of KIDINS220. An increase in KIDINS220 expression leads to a decreased association of NGFR and NTRK1. Interacts (via death domain) with RAB31. Interacts with NTRK2; may regulate the ligand specificity of the NTRK2 receptor. Interacts with LINGO1. Interacts with NRADD. Interacts with MAGED1; the interaction antagonizes the association NGFR:NTRK1. Interacts with RTN4R. Interacts (via death domain) with ARHGDIA and RIPK2. Interacts with BFAR. As to quaternary structure, (Microbial infection) Binds to rabies virus glycoprotein Gs. In terms of processing, N-glycosylated. O-glycosylated. Post-translationally, phosphorylated on serine residues. Detected in Schwann cells. Detected in embryonic brain, in hippocampus neurons (at protein level). Detected in brain and spinal cord.

It localises to the cell membrane. The protein resides in the cytoplasm. The protein localises to the perikaryon. It is found in the cell projection. Its subcellular location is the growth cone. It localises to the dendritic spine. Functionally, low affinity neurotrophin receptor which can bind to mature NGF, BDNF, NTF3, and NTF4. Forms a heterodimeric receptor with SORCS2 that binds the precursor forms of NGF (proNGF), BDNF (proBDNF) and NTF3 (proNT3) with high affinity, and has much lower affinity for mature NGF and BDNF. Plays an important role in differentiation and survival of specific neuronal populations during development. Can mediate cell survival as well as cell death of neural cells. The heterodimeric receptor formed with SORCS2 plays a role in proBDNF-dependent synaptic plasticity, in hippocampal long term depression (LTD) and long term potentiation (LTP). Plays a role in the inactivation of RHOA. Plays a role in the regulation of the translocation of GLUT4 to the cell surface in adipocytes and skeletal muscle cells in response to insulin, probably by regulating RAB31 activity, and thereby contributes to the regulation of insulin-dependent glucose uptake. Necessary for the circadian oscillation of the clock genes BMAL1, PER1, PER2 and NR1D1 in the suprachiasmatic nucleus (SCN) of the brain and in liver and of the genes involved in glucose and lipid metabolism in the liver. In terms of biological role, (Microbial infection) Cell surface receptor for rabies virus glycoprotein Gs. Does not bind NGF, BDNF, NTF3, and NTF4. The protein is Tumor necrosis factor receptor superfamily member 16 (Ngfr) of Mus musculus (Mouse).